Consider the following 225-residue polypeptide: UPF0128 protein PH1314 (225 aa).

The protein belongs to the UPF0128 family.

The sequence is that of UPF0128 protein PH1314 from Pyrococcus horikoshii (strain ATCC 700860 / DSM 12428 / JCM 9974 / NBRC 100139 / OT-3).